We begin with the raw amino-acid sequence, 192 residues long: Phosphoheptose isomerase (192 aa).

One can recognise an SIS domain in the interval 35 to 192 (LIETLENQGK…CIERHFAHKN (158 aa)). Substrate is bound at residue 50–52 (NGG). Residues His59 and Glu63 each contribute to the Zn(2+) site. Substrate-binding positions include Glu63, 92-93 (ND), 118-120 (STS), Ser123, and Gln170. Zn(2+) is bound by residues Gln170 and His178.

This sequence belongs to the SIS family. GmhA subfamily. In terms of assembly, homotetramer. Zn(2+) is required as a cofactor.

It is found in the cytoplasm. The catalysed reaction is 2 D-sedoheptulose 7-phosphate = D-glycero-alpha-D-manno-heptose 7-phosphate + D-glycero-beta-D-manno-heptose 7-phosphate. It functions in the pathway carbohydrate biosynthesis; D-glycero-D-manno-heptose 7-phosphate biosynthesis; D-glycero-alpha-D-manno-heptose 7-phosphate and D-glycero-beta-D-manno-heptose 7-phosphate from sedoheptulose 7-phosphate: step 1/1. It participates in bacterial outer membrane biogenesis; LPS core biosynthesis. Its function is as follows. Catalyzes the isomerization of sedoheptulose 7-phosphate in D-glycero-D-manno-heptose 7-phosphate. The sequence is that of Phosphoheptose isomerase from Helicobacter pylori (strain ATCC 700392 / 26695) (Campylobacter pylori).